We begin with the raw amino-acid sequence, 129 residues long: UPF0344 protein USA300HOU_0928 (129 aa).

The next 4 membrane-spanning stretches (helical) occupy residues 1–21 (MLHL…ATYL), 36–56 (LHMI…WILI), 67–87 (MLLT…EVSI), and 99–119 (MFWI…ILPL).

Belongs to the UPF0344 family.

It is found in the cell membrane. The protein is UPF0344 protein USA300HOU_0928 of Staphylococcus aureus (strain USA300 / TCH1516).